Here is a 194-residue protein sequence, read N- to C-terminus: MIGRLRGILAYKQPPWLVIDVGGVGYELEAPMSTFYDLPDVGRDVILFTHYAQKEDSVSLYGFLREGERRLFRDVQKVTGIGAKIALAVLSGVTVDEFARLITSGDITALTRIPGIGKKTAERMVVELRDRAADFSSGAPITGQLGPDAISEATVALQQLGYKPAEAARMARDAGAEGGEVATVIRKALQAALR.

The tract at residues 1-64 is domain I; it reads MIGRLRGILA…EDSVSLYGFL (64 aa). Positions 65–140 are domain II; it reads REGERRLFRD…RAADFSSGAP (76 aa). The flexible linker stretch occupies residues 140 to 144; it reads PITGQ. Positions 145–194 are domain III; sequence LGPDAISEATVALQQLGYKPAEAARMARDAGAEGGEVATVIRKALQAALR.

The protein belongs to the RuvA family. Homotetramer. Forms an RuvA(8)-RuvB(12)-Holliday junction (HJ) complex. HJ DNA is sandwiched between 2 RuvA tetramers; dsDNA enters through RuvA and exits via RuvB. An RuvB hexamer assembles on each DNA strand where it exits the tetramer. Each RuvB hexamer is contacted by two RuvA subunits (via domain III) on 2 adjacent RuvB subunits; this complex drives branch migration. In the full resolvosome a probable DNA-RuvA(4)-RuvB(12)-RuvC(2) complex forms which resolves the HJ.

The protein resides in the cytoplasm. The RuvA-RuvB-RuvC complex processes Holliday junction (HJ) DNA during genetic recombination and DNA repair, while the RuvA-RuvB complex plays an important role in the rescue of blocked DNA replication forks via replication fork reversal (RFR). RuvA specifically binds to HJ cruciform DNA, conferring on it an open structure. The RuvB hexamer acts as an ATP-dependent pump, pulling dsDNA into and through the RuvAB complex. HJ branch migration allows RuvC to scan DNA until it finds its consensus sequence, where it cleaves and resolves the cruciform DNA. The chain is Holliday junction branch migration complex subunit RuvA from Xanthomonas oryzae pv. oryzae (strain MAFF 311018).